The chain runs to 429 residues: Adenylosuccinate synthetase (429 aa).

GTP-binding positions include 12-18 (GDEGKGK) and 40-42 (GHT). Aspartate 13 (proton acceptor) is an active-site residue. 2 residues coordinate Mg(2+): aspartate 13 and glycine 40. IMP contacts are provided by residues 13–16 (DEGK), 38–41 (NAGH), threonine 129, arginine 143, glutamine 223, threonine 238, and arginine 302. Histidine 41 acts as the Proton donor in catalysis. Substrate is bound at residue 298-304 (TVTGRAR). Residues arginine 304, 330–332 (KLD), and 412–414 (STS) contribute to the GTP site.

Belongs to the adenylosuccinate synthetase family. In terms of assembly, homodimer. Mg(2+) is required as a cofactor.

It is found in the cytoplasm. The catalysed reaction is IMP + L-aspartate + GTP = N(6)-(1,2-dicarboxyethyl)-AMP + GDP + phosphate + 2 H(+). It participates in purine metabolism; AMP biosynthesis via de novo pathway; AMP from IMP: step 1/2. Its function is as follows. Plays an important role in the de novo pathway of purine nucleotide biosynthesis. Catalyzes the first committed step in the biosynthesis of AMP from IMP. This chain is Adenylosuccinate synthetase, found in Acidiphilium cryptum (strain JF-5).